The chain runs to 226 residues: MSSVTKRPRAKRIRLPLEIIDTILQYLDPILHAKVVGLTTRVKCRLLRDNNVEDYLKLTPASYHPTTDQFICNYLGITNQPMAPYLVPLLSFGKASCVFFNKCIPEDVRIVTLNWPLPLLENFLSKQFLWYKLARKLIEHERRMDRCVTPSTVQINLYDDNEDYLNCFNCFNCCKDNLVSFNCCIVDCNINDMNRCPDLQIDVYLDDNIISLYLYFLFRIYRIVKE.

Positions 9–58 (RAKRIRLPLEIIDTILQYLDPILHAKVVGLTTRVKCRLLRDNNVEDYLKL) constitute an F-box domain.

In terms of assembly, interacts with host S-phase kinase-associated protein 1/SKP1.

The protein resides in the host nucleus. The protein operates within protein degradation; proteasomal ubiquitin-dependent pathway. F-box protein that manipulates the host DNA damage response (DRR) in order to promote viral multiplication. Acts as a substrate recognition component of SKP1/Cullin/F-box (SCF) complexes for targeted protein polyubiquitination. This is Late expression factor 7 (LEF-7) from Lepidoptera (butterflies and moths).